A 520-amino-acid polypeptide reads, in one-letter code: Dynein axonemal assembly factor 8 (520 aa).

Disordered stretches follow at residues 93 to 202, 217 to 256, 328 to 366, and 388 to 520; these read PVLV…LRQE, RDAC…EGPP, CARK…QLAQ, and DHLS…LEQL. Residues 111-125 are compositionally biased toward basic and acidic residues; the sequence is RTKDASSQEGRDPGR. Serine 161 bears the Phosphoserine mark. Serine 351 carries the post-translational modification Phosphoserine. A compositionally biased stretch (acidic residues) spans 401–410; the sequence is DSEEEEEEEM. A compositionally biased stretch (polar residues) spans 420 to 437; it reads SPSSLGLRTCTGKSQLLQ.

As to expression, expressed in respiratory ciliated cells (at protein level).

The protein localises to the dynein axonemal particle. The protein resides in the cytoplasm. Functionally, in cyliated cells, dynein axonemal particle-specific protein required for deployment of ODA to the axoneme. Interacts with outer dynein arm (ODA) subunits. The sequence is that of Dynein axonemal assembly factor 8 from Homo sapiens (Human).